We begin with the raw amino-acid sequence, 426 residues long: UDP-N-acetylglucosamine 1-carboxyvinyltransferase 2 (426 aa).

Residue Lys22–Asn23 participates in phosphoenolpyruvate binding. Residue Arg92 coordinates UDP-N-acetyl-alpha-D-glucosamine. Residue Asp116 is the Proton donor of the active site. UDP-N-acetyl-alpha-D-glucosamine-binding positions include Arg121–Gln125, Asp307, and Ile329.

Belongs to the EPSP synthase family. MurA subfamily.

Its subcellular location is the cytoplasm. The enzyme catalyses phosphoenolpyruvate + UDP-N-acetyl-alpha-D-glucosamine = UDP-N-acetyl-3-O-(1-carboxyvinyl)-alpha-D-glucosamine + phosphate. The protein operates within cell wall biogenesis; peptidoglycan biosynthesis. Functionally, cell wall formation. Adds enolpyruvyl to UDP-N-acetylglucosamine. This chain is UDP-N-acetylglucosamine 1-carboxyvinyltransferase 2, found in Lactiplantibacillus plantarum (strain ATCC BAA-793 / NCIMB 8826 / WCFS1) (Lactobacillus plantarum).